An 887-amino-acid polypeptide reads, in one-letter code: Alanine--tRNA ligase (887 aa).

The Zn(2+) site is built by histidine 564, histidine 568, cysteine 676, and histidine 680.

It belongs to the class-II aminoacyl-tRNA synthetase family. Zn(2+) is required as a cofactor.

Its subcellular location is the cytoplasm. The enzyme catalyses tRNA(Ala) + L-alanine + ATP = L-alanyl-tRNA(Ala) + AMP + diphosphate. In terms of biological role, catalyzes the attachment of alanine to tRNA(Ala) in a two-step reaction: alanine is first activated by ATP to form Ala-AMP and then transferred to the acceptor end of tRNA(Ala). Also edits incorrectly charged Ser-tRNA(Ala) and Gly-tRNA(Ala) via its editing domain. This chain is Alanine--tRNA ligase, found in Rhizobium meliloti (strain 1021) (Ensifer meliloti).